The following is a 299-amino-acid chain: CCR4-NOT transcription complex subunit 9 (299 aa).

Belongs to the CNOT9 family. Homodimer. Component of the CCR4-NOT complex.

It is found in the nucleus. The protein resides in the cytoplasm. The protein localises to the P-body. Component of the CCR4-NOT complex which is one of the major cellular mRNA deadenylases and is linked to various cellular processes including bulk mRNA degradation, miRNA-mediated repression, translational repression during translational initiation and general transcription regulation. Additional complex functions may be a consequence of its influence on mRNA expression. Involved in down-regulation of MYB- and JUN-dependent transcription. Enhances ligand-dependent transcriptional activity of nuclear hormone receptors. May play a role in cell differentiation. This Xenopus tropicalis (Western clawed frog) protein is CCR4-NOT transcription complex subunit 9.